The primary structure comprises 629 residues: tRNA uridine 5-carboxymethylaminomethyl modification enzyme MnmG (629 aa).

FAD is bound by residues 14–19 (GAGHAG), Val126, and Ser181. 273–287 (GPRYCPSIEDKVVRF) is an NAD(+) binding site. Gln370 contributes to the FAD binding site.

The protein belongs to the MnmG family. As to quaternary structure, homodimer. Heterotetramer of two MnmE and two MnmG subunits. FAD is required as a cofactor.

The protein localises to the cytoplasm. Functionally, NAD-binding protein involved in the addition of a carboxymethylaminomethyl (cmnm) group at the wobble position (U34) of certain tRNAs, forming tRNA-cmnm(5)s(2)U34. This Bacillus cereus (strain ZK / E33L) protein is tRNA uridine 5-carboxymethylaminomethyl modification enzyme MnmG.